Reading from the N-terminus, the 707-residue chain is Protein kinase C-like 1B (707 aa).

In terms of domain architecture, C2 spans 1-114 (MLFTGTVRVR…KIGSANDIWV (114 aa)). 2 consecutive Phorbol-ester/DAG-type zinc fingers follow at residues 170–220 (GHKF…VWKC) and 248–298 (PHRF…ANNC). A disordered region spans residues 323–368 (SKKKPSIMTDTSTDISGSSNSENSGYLQQISEDDSGTTSSRSASKV). Positions 330-365 (MTDTSTDISGSSNSENSGYLQQISEDDSGTTSSRSA) are enriched in polar residues. The Protein kinase domain occupies 378–638 (FTFMKVLGKG…EDAIRAHPFF (261 aa)). Residues 384–392 (LGKGSFGKV) and Lys407 contribute to the ATP site. The active-site Proton acceptor is Asp502. The AGC-kinase C-terminal domain maps to 639 to 707 (REIDWDALES…FSFINPHFTY (69 aa)).

This sequence belongs to the protein kinase superfamily. AGC Ser/Thr protein kinase family. PKC subfamily. Expressed selectively in neurons that receive, transmit and process environmental signals.

The protein localises to the membrane. It is found in the cytoplasm. It localises to the cytoskeleton. The enzyme catalyses L-seryl-[protein] + ATP = O-phospho-L-seryl-[protein] + ADP + H(+). It carries out the reaction L-threonyl-[protein] + ATP = O-phospho-L-threonyl-[protein] + ADP + H(+). PKC is activated by diacylglycerol which in turn phosphorylates a range of cellular proteins. PKC also serves as the receptor for phorbol esters, a class of tumor promoters. Involved in neuropeptide secretion in motor axons. Likely to act via the extracellular signal-regulated kinase/mitogen-activated protein kinase (ERK/MAPK) pathway in the signaling response to various sensory neurons; temperature, odor, taste, and osmolality. Its role in regulation differs depending on the neuron in which it is acting; thermosensation in AFD neurons, osmolality in ASH neurons, olfactory perception in AWA and AWC neurons. Promotes dauer formation mediated by the insulin/IGF pathway. Required for resistance to antimitotic toxins. In Caenorhabditis elegans, this protein is Protein kinase C-like 1B.